Reading from the N-terminus, the 305-residue chain is Coenzyme PQQ synthesis protein B (305 aa).

It belongs to the PqqB family.

It participates in cofactor biosynthesis; pyrroloquinoline quinone biosynthesis. Functionally, may be involved in the transport of PQQ or its precursor to the periplasm. This Cupriavidus necator (strain ATCC 17699 / DSM 428 / KCTC 22496 / NCIMB 10442 / H16 / Stanier 337) (Ralstonia eutropha) protein is Coenzyme PQQ synthesis protein B.